A 243-amino-acid polypeptide reads, in one-letter code: Pyridoxine 5'-phosphate synthase (243 aa).

A 3-amino-2-oxopropyl phosphate-binding site is contributed by Asn-9. A 1-deoxy-D-xylulose 5-phosphate-binding site is contributed by 11–12 (DH). Arg-20 contributes to the 3-amino-2-oxopropyl phosphate binding site. His-45 acts as the Proton acceptor in catalysis. Positions 47 and 52 each coordinate 1-deoxy-D-xylulose 5-phosphate. Glu-72 functions as the Proton acceptor in the catalytic mechanism. Thr-102 serves as a coordination point for 1-deoxy-D-xylulose 5-phosphate. His-193 serves as the catalytic Proton donor. 3-amino-2-oxopropyl phosphate is bound by residues Gly-194 and 215–216 (GH).

Belongs to the PNP synthase family. Homooctamer; tetramer of dimers.

Its subcellular location is the cytoplasm. It carries out the reaction 3-amino-2-oxopropyl phosphate + 1-deoxy-D-xylulose 5-phosphate = pyridoxine 5'-phosphate + phosphate + 2 H2O + H(+). It functions in the pathway cofactor biosynthesis; pyridoxine 5'-phosphate biosynthesis; pyridoxine 5'-phosphate from D-erythrose 4-phosphate: step 5/5. Its function is as follows. Catalyzes the complicated ring closure reaction between the two acyclic compounds 1-deoxy-D-xylulose-5-phosphate (DXP) and 3-amino-2-oxopropyl phosphate (1-amino-acetone-3-phosphate or AAP) to form pyridoxine 5'-phosphate (PNP) and inorganic phosphate. The polypeptide is Pyridoxine 5'-phosphate synthase (Aliivibrio fischeri (strain ATCC 700601 / ES114) (Vibrio fischeri)).